The primary structure comprises 88 residues: Small ribosomal subunit protein bS20 (88 aa).

The protein belongs to the bacterial ribosomal protein bS20 family.

Binds directly to 16S ribosomal RNA. This chain is Small ribosomal subunit protein bS20, found in Rhodopseudomonas palustris (strain BisA53).